Reading from the N-terminus, the 531-residue chain is 4-hydroxyphenylacetaldehyde oxime monooxygenase (531 aa).

The chain crosses the membrane as a helical span at residues 18–38; it reads WQTCLLVLLPVLLVSYYLLTS. Arg122, Arg151, Arg466, and Cys468 together coordinate heme b.

It belongs to the cytochrome P450 family. Heme b serves as cofactor.

The protein resides in the endoplasmic reticulum membrane. It carries out the reaction (E)-4-hydroxyphenylacetaldehyde oxime + reduced [NADPH--hemoprotein reductase] + O2 = (S)-4-hydroxymandelonitrile + oxidized [NADPH--hemoprotein reductase] + 2 H2O + H(+). It catalyses the reaction (E)-4-hydroxyphenylacetaldehyde oxime = (Z)-(4-hydroxyphenyl)acetaldehyde oxime. The catalysed reaction is (Z)-(4-hydroxyphenyl)acetaldehyde oxime = 4-hydroxyphenylacetonitrile + H2O. The enzyme catalyses 4-hydroxyphenylacetonitrile + reduced [NADPH--hemoprotein reductase] + O2 = (S)-4-hydroxymandelonitrile + oxidized [NADPH--hemoprotein reductase] + H2O + H(+). It functions in the pathway secondary metabolite biosynthesis; dhurrin biosynthesis; dhurrin from L-tyrosine: step 2/3. In terms of biological role, cytochrome P450 involved in the biosynthesis of the cyanogenic glucoside dhurrin. Catalyzes the conversion of p-hydroxyphenylacetaldoxime to p-hydroxymandelonitrile via three different and successive activities: isomerization of the (E) isomer to the (Z) isomer of p-hydroxyphenylacetaldoxime, followed by dehydration of the oxime to the corresponding nitrile, and C-hydroxylation of the nitrile to produce p-hydroxymandelonitrile. This chain is 4-hydroxyphenylacetaldehyde oxime monooxygenase, found in Sorghum bicolor (Sorghum).